Reading from the N-terminus, the 245-residue chain is Aliphatic sulfonates import ATP-binding protein SsuB (245 aa).

The ABC transporter domain occupies 6 to 225; it reads VTVRGLRRAF…SRGDEGFDDL (220 aa). 38–45 provides a ligand contact to ATP; sequence GLSGSGKS.

Belongs to the ABC transporter superfamily. Aliphatic sulfonates importer (TC 3.A.1.17.2) family. The complex is composed of two ATP-binding proteins (SsuB), two transmembrane proteins (SsuC) and a solute-binding protein (SsuA).

It localises to the cell membrane. It catalyses the reaction ATP + H2O + aliphatic sulfonate-[sulfonate-binding protein]Side 1 = ADP + phosphate + aliphatic sulfonateSide 2 + [sulfonate-binding protein]Side 1.. Functionally, part of the ABC transporter complex SsuABC involved in aliphatic sulfonates import. Responsible for energy coupling to the transport system. The chain is Aliphatic sulfonates import ATP-binding protein SsuB from Mycobacterium sp. (strain MCS).